We begin with the raw amino-acid sequence, 321 residues long: MSKPIQMEKGVKYRDADKMALIPVKNMPSEQKEVLRKPDWMKIKLPADSQRIQDIKSAMRKNNLHSVCEEASCPNLAECFNHGTATFMILGAICTRRCPFCDVAHGRPLPVEAEEPKKLAKTIADMKLKYVVITSVDRDDLRDGGAEHFANCNREIRELNPHIKIETLVPDFRGRMDVALDLMKDNPPDVFNHNLETAPRLYRKARPGANYKWSLQLLQKFKEQHPNVPTKSGLMMGLGETKEEIVEVLKDLRAHGVTMLTLGQYLAPSRHHLPVERYVPPSEFDELKEIALELGFTHAACGPFVRSSYHADMQAQGIEIK.

Cys-68, Cys-73, Cys-79, Cys-94, Cys-98, Cys-101, and Ser-308 together coordinate [4Fe-4S] cluster. Positions 80–297 constitute a Radical SAM core domain; sequence FNHGTATFMI…KEIALELGFT (218 aa).

This sequence belongs to the radical SAM superfamily. Lipoyl synthase family. The cofactor is [4Fe-4S] cluster.

The protein localises to the cytoplasm. The enzyme catalyses [[Fe-S] cluster scaffold protein carrying a second [4Fe-4S](2+) cluster] + N(6)-octanoyl-L-lysyl-[protein] + 2 oxidized [2Fe-2S]-[ferredoxin] + 2 S-adenosyl-L-methionine + 4 H(+) = [[Fe-S] cluster scaffold protein] + N(6)-[(R)-dihydrolipoyl]-L-lysyl-[protein] + 4 Fe(3+) + 2 hydrogen sulfide + 2 5'-deoxyadenosine + 2 L-methionine + 2 reduced [2Fe-2S]-[ferredoxin]. It participates in protein modification; protein lipoylation via endogenous pathway; protein N(6)-(lipoyl)lysine from octanoyl-[acyl-carrier-protein]: step 2/2. Its function is as follows. Catalyzes the radical-mediated insertion of two sulfur atoms into the C-6 and C-8 positions of the octanoyl moiety bound to the lipoyl domains of lipoate-dependent enzymes, thereby converting the octanoylated domains into lipoylated derivatives. The polypeptide is Lipoyl synthase (Vibrio campbellii (strain ATCC BAA-1116)).